A 155-amino-acid chain; its full sequence is Zinc finger HIT domain-containing protein 3 (155 aa).

Positions 11, 14, 22, 25, 30, 34, 38, and 42 each coordinate Zn(2+). The HIT-type zinc-finger motif lies at 11–42; sequence CVICLEKPKYRCPACRVPYCSVVCFRKHKEQC. Ser80 is modified (phosphoserine).

Thyroid receptor interacting proteins (TRIPs) specifically interact with the ligand binding domain of the thyroid receptor (TR). Requires the presence of thyroid hormone for its interaction. Interacts with NUFIP1. Interacts (via HIT-type zinc finger) with the RUVBL1/RUVBL2 complex in the presence of ADP.

It is found in the cytoplasm. The protein resides in the nucleus. In Homo sapiens (Human), this protein is Zinc finger HIT domain-containing protein 3 (ZNHIT3).